Consider the following 176-residue polypeptide: Peptidyl-prolyl cis-trans isomerase CYP19-3 (176 aa).

One can recognise a PPIase cyclophilin-type domain in the interval 7–170 (FFDILIGKMK…ERVVIEDCGE (164 aa)).

Belongs to the cyclophilin-type PPIase family. Ubiquitous, with highest levels in flowers and lowest levels in roots.

Its subcellular location is the cytoplasm. It carries out the reaction [protein]-peptidylproline (omega=180) = [protein]-peptidylproline (omega=0). With respect to regulation, binds cyclosporin A (CsA). CsA mediates some of its effects via an inhibitory action on PPIase. Its function is as follows. PPIases accelerate the folding of proteins. It catalyzes the cis-trans isomerization of proline imidic peptide bonds in oligopeptides. In Arabidopsis thaliana (Mouse-ear cress), this protein is Peptidyl-prolyl cis-trans isomerase CYP19-3 (CYP19-3).